The primary structure comprises 632 residues: Probable potassium transport system protein Kup 1 (632 aa).

12 helical membrane-spanning segments follow: residues 17-37 (LFYL…TSPL), 60-80 (LISL…VLFL), 106-126 (TAIL…DAMI), 146-166 (LADY…VVQS), 175-195 (FFGP…ISHI), 210-230 (AVAF…AVFL), 254-274 (WFLL…ALVL), 292-312 (ALLP…QAVI), 344-364 (IFVP…VLGF), 370-390 (LATA…IMAF), 401-421 (LPVA…FLGA), and 426-446 (IHDG…VMWT).

It belongs to the HAK/KUP transporter (TC 2.A.72) family.

It is found in the cell inner membrane. The catalysed reaction is K(+)(in) + H(+)(in) = K(+)(out) + H(+)(out). Functionally, transport of potassium into the cell. Likely operates as a K(+):H(+) symporter. This is Probable potassium transport system protein Kup 1 from Rhizobium johnstonii (strain DSM 114642 / LMG 32736 / 3841) (Rhizobium leguminosarum bv. viciae).